The sequence spans 90 residues: Probable Fe(2+)-trafficking protein (90 aa).

The protein belongs to the Fe(2+)-trafficking protein family.

Its function is as follows. Could be a mediator in iron transactions between iron acquisition and iron-requiring processes, such as synthesis and/or repair of Fe-S clusters in biosynthetic enzymes. The sequence is that of Probable Fe(2+)-trafficking protein from Nitrosomonas eutropha (strain DSM 101675 / C91 / Nm57).